Here is a 652-residue protein sequence, read N- to C-terminus: Potassium voltage-gated channel subfamily KQT member 1 (652 aa).

The Cytoplasmic portion of the chain corresponds to methionine 1–tryptophan 110. The chain crosses the membrane as a helical span at residues lysine 111–leucine 132. At serine 133 to threonine 143 the chain is on the extracellular side. Residues glutamate 144–tryptophan 166 traverse the membrane as a helical segment. The Cytoplasmic segment spans residues serine 167–arginine 182. Residues phenylalanine 183–asparagine 208 form a helical membrane-spanning segment. The Extracellular segment spans residues glycine 209–alanine 216. The helical; Voltage-sensor transmembrane segment at isoleucine 217–aspartate 232 threads the bilayer. The segment at methionine 228–glycine 236 is interaction with KCNE3. Over arginine 233–glutamine 250 the chain is Cytoplasmic. Glutamine 234 is a binding site for a 1,2-diacyl-sn-glycero-3-phospho-(1D-myo-inositol-4,5-bisphosphate). Residues glutamate 251–alanine 273 form a helical membrane-spanning segment. The Extracellular segment spans residues glutamate 274 to tyrosine 289. The pore-forming intramembrane region spans alanine 290–proline 310. At glutamine 311 to threonine 312 the chain is on the extracellular side. Residues tryptophan 313 to glycine 338 form a helical membrane-spanning segment. At serine 339–serine 652 the chain is on the cytoplasmic side. Residues alanine 360–tyrosine 372 form an interaction with CALM region. Positions histidine 393–glutamate 419 are disordered. The segment covering lysine 401–arginine 414 has biased composition (basic residues). The tract at residues lysine 504–phenylalanine 518 is interaction with CALM; calcium-dependent. An interaction with KCNE1 C-terminus region spans residues proline 524–leucine 561. The segment at isoleucine 577–leucine 605 is interaction with AKAP9. The C-terminal assembly domain (tetramerization) stretch occupies residues glycine 578–glutamine 609. Residues glutamine 609 to serine 652 form a disordered region.

The protein belongs to the potassium channel family. KQT (TC 1.A.1.15) subfamily. Kv7.1/KCNQ1 sub-subfamily. In terms of assembly, tetramer. Heterotetramer with KCNE1; targets to the membrane raft. Interacts (via C-terminus) with CALM; forms a heterotetramer in a calcium-independent manner. Interacts with KCNE2; form a heterooligomer complex that targets to the membrane raft and leading to currents with an apparently instantaneous activation, a rapid deactivation process and a linear current-voltage relationship and decreases the amplitude of the outward current. Interacts with KCNE3; four KCNE3 molecules are bound to one KCNQ1 tetramer (4:4 KCNQ1:KCNE3 stoichiometry); alters membrane raft localization; affects KCNQ1 structure and gating properties. Interacts with KCNE4; impairs KCNQ1 localization in lipid rafts and inhibits voltage-gated potassium channel activity. Interacts with KCNE5; impairs KCNQ1 localization in lipid rafts and only conducts current upon strong and continued depolarization.

It is found in the cell membrane. Its subcellular location is the cytoplasmic vesicle membrane. The protein localises to the membrane raft. The protein resides in the endoplasmic reticulum. It localises to the basolateral cell membrane. It carries out the reaction K(+)(in) = K(+)(out). PIP2 molecule is essential to activate KCNQ channels by inducing the coupling of the voltage-sensing domain (VSD) and the pore-forming domain (PD). Upon channel activation, PIP2 disrupts the VSD-calmodulin/CALM interactions, causing the release of CALM from the VSD which triggers the opening of the gate. Calcium potentiates KCNQ1 channel current through calcium-bound CALM. Calcium-bound CALM competes with PIP2 to stabilize the channel open state. In terms of biological role, pore-forming subunit of the voltage-gated potassium (Kv) channel involved in the regulation of cardiomyocyte excitability and important in normal development and functions of myocardium, inner ear, stomach and colon. Associates with KCNE beta subunits that modulates current kinetics. Induces a voltage-dependent by rapidly activating and slowly deactivating potassium-selective outward current. Also promotes a delayed voltage activated potassium current showing outward rectification characteristic. During beta-adrenergic receptor stimulation participates in cardiac repolarization by associating with KCNE1 to form the I(Ks) cardiac potassium current that increases the amplitude and slows down the activation kinetics of outward potassium current I(Ks). When associated with KCNE3, forms the potassium channel that is important for cyclic AMP-stimulated intestinal secretion of chloride ions. When associated with KCNE2, forms a heterooligomer complex leading to currents with an apparently instantaneous activation, a rapid deactivation process and a linear current-voltage relationship and decreases the amplitude of the outward current. When associated with KCNE4, inhibits voltage-gated potassium channel activity. When associated with KCNE5, this complex only conducts current upon strong and continued depolarization. The chain is Potassium voltage-gated channel subfamily KQT member 1 from Xenopus laevis (African clawed frog).